The following is a 315-amino-acid chain: tRNA dimethylallyltransferase (315 aa).

Residue 11–18 (GPTASGKS) coordinates ATP. 13–18 (TASGKS) lines the substrate pocket. Interaction with substrate tRNA stretches follow at residues 36–39 (DSMQ) and 160–164 (QRLIR).

Belongs to the IPP transferase family. As to quaternary structure, monomer. Mg(2+) is required as a cofactor.

It carries out the reaction adenosine(37) in tRNA + dimethylallyl diphosphate = N(6)-dimethylallyladenosine(37) in tRNA + diphosphate. In terms of biological role, catalyzes the transfer of a dimethylallyl group onto the adenine at position 37 in tRNAs that read codons beginning with uridine, leading to the formation of N6-(dimethylallyl)adenosine (i(6)A). This is tRNA dimethylallyltransferase from Rickettsia bellii (strain OSU 85-389).